Reading from the N-terminus, the 234-residue chain is Leucyl/phenylalanyl-tRNA--protein transferase (234 aa).

This sequence belongs to the L/F-transferase family.

The protein localises to the cytoplasm. It carries out the reaction N-terminal L-lysyl-[protein] + L-leucyl-tRNA(Leu) = N-terminal L-leucyl-L-lysyl-[protein] + tRNA(Leu) + H(+). The catalysed reaction is N-terminal L-arginyl-[protein] + L-leucyl-tRNA(Leu) = N-terminal L-leucyl-L-arginyl-[protein] + tRNA(Leu) + H(+). It catalyses the reaction L-phenylalanyl-tRNA(Phe) + an N-terminal L-alpha-aminoacyl-[protein] = an N-terminal L-phenylalanyl-L-alpha-aminoacyl-[protein] + tRNA(Phe). Functionally, functions in the N-end rule pathway of protein degradation where it conjugates Leu, Phe and, less efficiently, Met from aminoacyl-tRNAs to the N-termini of proteins containing an N-terminal arginine or lysine. This chain is Leucyl/phenylalanyl-tRNA--protein transferase, found in Pectobacterium atrosepticum (strain SCRI 1043 / ATCC BAA-672) (Erwinia carotovora subsp. atroseptica).